The following is a 137-amino-acid chain: Interferon-induced transmembrane protein 3 (137 aa).

At 1–57 the chain is on the cytoplasmic side; sequence MNHTSQAFVNAATGGQPPNYERIKEEYEVSELGAPHGSASVRTTVINMPREVSVPDH. Tyr20 bears the Phosphotyrosine mark. A Glycyl lysine isopeptide (Lys-Gly) (interchain with G-Cter in ubiquitin) cross-link involves residue Lys24. Tyr27 bears the Phosphotyrosine mark. The helical intramembrane region spans 58–78; that stretch reads VVWSLFNTLFMNFCCLGFIAY. Positions 60–93 are interaction with SPP1; the sequence is WSLFNTLFMNFCCLGFIAYAYSVKSRDRKMVGDM. 2 S-palmitoyl cysteine lipidation sites follow: Cys71 and Cys72. At 79 to 109 the chain is on the cytoplasmic side; it reads AYSVKSRDRKMVGDMTGAQAYASTAKCLNIS. Residues Lys83, Lys88, and Lys104 each participate in a glycyl lysine isopeptide (Lys-Gly) (interchain with G-Cter in ubiquitin) cross-link. The S-palmitoyl cysteine moiety is linked to residue Cys105. The tract at residues 108–133 is interaction with VAPA; sequence ISSLVLSILMVIITIVTVVIIALNAP. The chain crosses the membrane as a helical span at residues 110-130; the sequence is SLVLSILMVIITIVTVVIIAL. Over 131-137 the chain is Extracellular; sequence NAPRLQT.

The protein belongs to the CD225/Dispanin family. As to quaternary structure, interacts with ATP6V0B. Interacts with CD81. Interacts with SPP1; the interaction reduces OPN expression. Interacts with BRI3. Post-translationally, polyubiquitinated with both 'Lys-48' and 'Lys-63' linkages. Ubiquitination negatively regulates antiviral activity. Lys-24 is the most prevalent ubiquitination site. In terms of processing, phosphorylation at Tyr-20 is required for endosomal and lysosomal location.

The protein resides in the cell membrane. It localises to the late endosome membrane. Its subcellular location is the early endosome membrane. It is found in the lysosome membrane. The protein localises to the cytoplasm. The protein resides in the perinuclear region. Functionally, IFN-induced antiviral protein which disrupts intracellular cholesterol homeostasis. Inhibits the entry of viruses to the host cell cytoplasm by preventing viral fusion with cholesterol depleted endosomes. May inactivate new enveloped viruses which buds out of the infected cell, by letting them go out with a cholesterol depleted membrane. Active against multiple viruses. Plays a critical role in the structural stability and function of vacuolar ATPase (v-ATPase). Establishes physical contact with the v-ATPase of endosomes which is critical for proper clathrin localization and is also required for the function of the v-ATPase to lower the pH in phagocytic endosomes thus establishing an antiviral state. This Rattus norvegicus (Rat) protein is Interferon-induced transmembrane protein 3.